A 185-amino-acid polypeptide reads, in one-letter code: Adenine phosphoribosyltransferase (185 aa).

This sequence belongs to the purine/pyrimidine phosphoribosyltransferase family. Homodimer.

It localises to the cytoplasm. It carries out the reaction AMP + diphosphate = 5-phospho-alpha-D-ribose 1-diphosphate + adenine. The protein operates within purine metabolism; AMP biosynthesis via salvage pathway; AMP from adenine: step 1/1. Functionally, catalyzes a salvage reaction resulting in the formation of AMP, that is energically less costly than de novo synthesis. In Rubrobacter xylanophilus (strain DSM 9941 / JCM 11954 / NBRC 16129 / PRD-1), this protein is Adenine phosphoribosyltransferase.